Consider the following 336-residue polypeptide: HTH-type transcriptional repressor PurR (336 aa).

One can recognise an HTH lacI-type domain in the interval 2–56 (ATIKDVAKMAGVSTTTVSHVINKTRFVAKDTEEAVLSAIKQLNYSPSAVARSLKV). The segment at residues 4–23 (IKDVAKMAGVSTTTVSHVIN) is a DNA-binding region (H-T-H motif). A DNA-binding region spans residues 48–56 (SAVARSLKV). Hypoxanthine-binding residues include Y73, K188, T190, F219, and D273.

Homodimer.

The protein operates within purine metabolism; purine nucleotide biosynthesis [regulation]. Is the main repressor of the genes involved in the de novo synthesis of purine nucleotides, regulating purB, purC, purEK, purF, purHD, purL, purMN and guaBA expression. PurR is allosterically activated to bind its cognate DNA by binding the purine corepressors, hypoxanthine or guanine, thereby effecting transcription repression. The polypeptide is HTH-type transcriptional repressor PurR (Haemophilus influenzae (strain 86-028NP)).